The primary structure comprises 798 residues: Protocadherin beta-14 (798 aa).

The signal sequence occupies residues 1 to 26 (MEIRGALDLRKRQVLIFLVLLGLSRA). At 27–686 (GTESAHYSVA…APAQAQADSL (660 aa)) the chain is on the extracellular side. 5 consecutive Cadherin domains span residues 35–133 (VAEE…SPTF), 138–242 (ILIK…APEF), 247–347 (YEVQ…PPEV), 352–451 (ITKR…APTF), and 456–561 (YTLF…SPFV). Cys96 and Cys102 form a disulfide bridge. Asn169 carries an N-linked (GlcNAc...) asparagine glycan. N-linked (GlcNAc...) asparagine glycosylation is found at Asn359, Asn418, Asn436, Asn487, and Asn567. In terms of domain architecture, Cadherin 6 spans 568-671 (GSAPCTELVP…LVDGFSQPYL (104 aa)). The chain crosses the membrane as a helical span at residues 687-711 (TVYLVVALASVSSLFLFSVLLFVAV). At 712–798 (RLCRRSRAAS…FRNSFGLNIQ (87 aa)) the chain is on the cytoplasmic side.

It is found in the cell membrane. Its function is as follows. Potential calcium-dependent cell-adhesion protein. May be involved in the establishment and maintenance of specific neuronal connections in the brain. The protein is Protocadherin beta-14 (PCDHB14) of Homo sapiens (Human).